Consider the following 197-residue polypeptide: Transmembrane 4 L6 family member 5 (197 aa).

Over 1–9 (MCTGKCARC) the chain is Cytoplasmic. The chain crosses the membrane as a helical span at residues 10 to 30 (VGLSLITLCLVCIVANALLLV). The Extracellular portion of the chain corresponds to 31 to 46 (PNGETSWTNTNHLSLQ). The chain crosses the membrane as a helical span at residues 47–67 (VWLMGGFIGGGLMVLCPGIAA). Over 68–90 (VRAGGKGCCGAGCCGNRCRMLRS) the chain is Cytoplasmic. Residues 91–111 (VFSSAFGVLGAIYCLSVSGAG) form a helical membrane-spanning segment. Residues 91–197 (VFSSAFGVLG…DCRKKQDTPH (107 aa)) are interaction with MTOR and CASTOR1. Residues 112 to 157 (LRNGPRCLMNGEWGYHFEDTAGAYLLNRTLWDRCEAPPRVVPWNVT) lie on the Extracellular side of the membrane. An L-arginine-binding site is contributed by 124 to 129 (WGYHFE). 2 N-linked (GlcNAc...) asparagine glycosylation sites follow: Asn-138 and Asn-155. Residues 158-178 (LFSLLVAASCLEIVLCGIQLV) form a helical membrane-spanning segment. At 179-197 (NATIGVFCGDCRKKQDTPH) the chain is on the cytoplasmic side.

It belongs to the L6 tetraspanin family. As to quaternary structure, interacts with MTOR; the interaction is positively regulated by arginine and is negatively regulated by leucine. Interacts with SLC38A9. Interacts with SLC7A1; the interaction is negatively regulated by arginine. Interacts with CASTOR1; the interaction is positively regulated by leucine and is negatively regulated by arginine. Intestine. Overexpressed in pancreatic cancers.

It localises to the lysosome membrane. Its subcellular location is the cell membrane. Functionally, acts as a lysosomal membrane arginine sensor. Forms a complex with MTOR and SLC38A9 on lysosomal membranes in an arginine-regulated manner, leading to arginine efflux which enables the activation of mTORC1 which subsequently leads to RPS6KB1 and EIF4EBP1 phosphorylations. Facilitates cell cycle G1/S phase progression and the translocation of the CDK4-CCND1 complex into the nucleus. CDKN1B and RHOA/ROCK signaling activity are involved in TM4SF5-mediated acceleration of G1/S phase progression. This is Transmembrane 4 L6 family member 5 (TM4SF5) from Homo sapiens (Human).